We begin with the raw amino-acid sequence, 153 residues long: Small ribosomal subunit protein uS13 (153 aa).

The disordered stretch occupies residues 134–153; sequence GQRTKSNGRRGRSMGVSRKK.

Belongs to the universal ribosomal protein uS13 family.

Its subcellular location is the cytoplasm. Located at the top of the head of the 40S subunit, it contacts several helices of the 18S rRNA. The polypeptide is Small ribosomal subunit protein uS13 (RPS18) (Encephalitozoon cuniculi (strain GB-M1) (Microsporidian parasite)).